A 167-amino-acid chain; its full sequence is Protein DLS1 (167 aa).

At Ser-17 the chain carries Phosphoserine.

In terms of assembly, component of the ISW2 complex, which at least consists of ISW2, ITC1, DLS1 and DPB4.

The protein localises to the nucleus. In terms of biological role, functions as a component of the ISW2 complex, which acts in remodeling the chromatin by catalyzing an ATP-dependent alteration in the structure of nucleosomal DNA. The ISW2 complex is involved in coordinating transcriptional repression and in inheritance of telomeric silencing. It is involved in repression of MAT a-specific genes, INO1, and early meiotic genes during mitotic growth dependent upon transcription factor UME6 and in a parallel pathway to the RPD3-SIN3 histone deacetylase complex. DLS1 is partially required for the ISW2 complex chromatin remodeling activity and is not required for its interaction with chromatin. The protein is Protein DLS1 (DLS1) of Saccharomyces cerevisiae (strain ATCC 204508 / S288c) (Baker's yeast).